A 127-amino-acid chain; its full sequence is Putative adhesin P1-like protein MPN_203 (127 aa).

The segment at 70 to 90 is disordered; it reads TENFTQPQPQPQALKTTTPVF.

It belongs to the adhesin P1 family.

The polypeptide is Putative adhesin P1-like protein MPN_203 (Mycoplasma pneumoniae (strain ATCC 29342 / M129 / Subtype 1) (Mycoplasmoides pneumoniae)).